A 342-amino-acid polypeptide reads, in one-letter code: Farnesyl pyrophosphate synthase 1 (342 aa).

Isopentenyl diphosphate contacts are provided by Lys48, Arg51, and Gln86. The Mg(2+) site is built by Asp93 and Asp97. Arg102 is a binding site for dimethylallyl diphosphate. An isopentenyl diphosphate-binding site is contributed by Arg103. Dimethylallyl diphosphate contacts are provided by Lys190, Thr191, Gln229, Lys246, and Lys255.

The protein belongs to the FPP/GGPP synthase family. It depends on Mg(2+) as a cofactor.

It is found in the cytoplasm. It carries out the reaction isopentenyl diphosphate + dimethylallyl diphosphate = (2E)-geranyl diphosphate + diphosphate. The catalysed reaction is isopentenyl diphosphate + (2E)-geranyl diphosphate = (2E,6E)-farnesyl diphosphate + diphosphate. The protein operates within isoprenoid biosynthesis; farnesyl diphosphate biosynthesis; farnesyl diphosphate from geranyl diphosphate and isopentenyl diphosphate: step 1/1. Its pathway is isoprenoid biosynthesis; geranyl diphosphate biosynthesis; geranyl diphosphate from dimethylallyl diphosphate and isopentenyl diphosphate: step 1/1. In terms of biological role, catalyzes the sequential condensation of isopentenyl pyrophosphate with the allylic pyrophosphates, dimethylallyl pyrophosphate, and then with the resultant geranylpyrophosphate to the ultimate product farnesyl pyrophosphate. The polypeptide is Farnesyl pyrophosphate synthase 1 (FPS1) (Parthenium argentatum (Guayule rubber plant)).